We begin with the raw amino-acid sequence, 303 residues long: Flavin-dependent thymidylate synthase (303 aa).

The region spanning 41–258 is the ThyX domain; the sequence is GKVALVDTMP…PVACEAFIDY (218 aa). Residues serine 95, 118 to 120, and glutamate 126 each bind FAD; that span reads RHR. DUMP contacts are provided by residues 115 to 118, 126 to 130, and arginine 197; these read QWIR and EYSAR. A ThyX motif motif is present at residues 118–128; the sequence is RHRTANVNEYS. FAD-binding positions include 213 to 215 and histidine 219; that span reads DLH. Residue arginine 224 participates in dUMP binding. Arginine 224 (involved in ionization of N3 of dUMP, leading to its activation) is an active-site residue.

Belongs to the thymidylate synthase ThyX family. As to quaternary structure, homotetramer. It depends on FAD as a cofactor.

The catalysed reaction is dUMP + (6R)-5,10-methylene-5,6,7,8-tetrahydrofolate + NADPH + H(+) = dTMP + (6S)-5,6,7,8-tetrahydrofolate + NADP(+). It participates in pyrimidine metabolism; dTTP biosynthesis. In terms of biological role, catalyzes the reductive methylation of 2'-deoxyuridine-5'-monophosphate (dUMP) to 2'-deoxythymidine-5'-monophosphate (dTMP) while utilizing 5,10-methylenetetrahydrofolate (mTHF) as the methyl donor, and NADPH and FADH(2) as the reductant. The polypeptide is Flavin-dependent thymidylate synthase (thyA) (Dictyostelium discoideum (Social amoeba)).